Consider the following 778-residue polypeptide: Dolichyl-phosphate-mannose--protein mannosyltransferase 4 (778 aa).

Residues 1 to 28 (MASKSEKAVKKAQKLSKEPSVELTDTKS) show a composition bias toward basic and acidic residues. Residues 1–44 (MASKSEKAVKKAQKLSKEPSVELTDTKSSDNVTPKQKSPNSTEE) form a disordered region. Residues 29-41 (SDNVTPKQKSPNS) show a composition bias toward polar residues. A glycan (N-linked (GlcNAc...) asparagine) is linked at Asn-40. 7 consecutive transmembrane segments (helical) span residues 60–80 (LAFVLITVLSFITRFWNLNLP), 103–123 (FFDLHPPFAKLLLALVAKLAG), 145–165 (VTIRAWPALLSSLVPPVVFLI), 196–216 (ILLDATLLFSMVCAIYCYVRF), 223–243 (PFSRPWWAWLFFTGFFLSCTI), 248–268 (VGFFTFLSIGLSVCLELWYLW), and 288–308 (FCLIFFPFLFFLFWFYMHFNI). N-linked (GlcNAc...) asparagine glycosylation occurs at Asn-335. 3 consecutive MIR domains span residues 336-396 (STIL…ILPA), 408-467 (NVPV…VVMS), and 474-529 (RPLY…FDDI). The next 4 helical transmembrane spans lie at 608–628 (WWIIAGTVLSTTVVAAAEILL), 644–664 (FYRSTMFFYMTYVFHYLPFFI), 669–689 (LFLHHYLPAHLAGSLLVGAFI), and 726–746 (VIELICTLLLIFVVIYCFTFF).

This sequence belongs to the glycosyltransferase 39 family.

It is found in the endoplasmic reticulum membrane. The catalysed reaction is a di-trans,poly-cis-dolichyl beta-D-mannosyl phosphate + L-seryl-[protein] = 3-O-(alpha-D-mannosyl)-L-seryl-[protein] + a di-trans,poly-cis-dolichyl phosphate + H(+). It catalyses the reaction a di-trans,poly-cis-dolichyl beta-D-mannosyl phosphate + L-threonyl-[protein] = 3-O-(alpha-D-mannosyl)-L-threonyl-[protein] + a di-trans,poly-cis-dolichyl phosphate + H(+). Its pathway is protein modification; protein glycosylation. Functionally, transfers mannose from Dol-P-mannose to Ser or Thr residues on proteins. Required for normal cell wall and septum formation. In Schizosaccharomyces pombe (strain 972 / ATCC 24843) (Fission yeast), this protein is Dolichyl-phosphate-mannose--protein mannosyltransferase 4 (ogm4).